Here is a 115-residue protein sequence, read N- to C-terminus: Evasin P1181 (115 aa).

An N-terminal signal peptide occupies residues 1-25 (MALNWSFRVIFVSAMWCALLKFATL). Cystine bridges form between cysteine 38–cysteine 58, cysteine 54–cysteine 94, cysteine 70–cysteine 99, and cysteine 89–cysteine 108. N-linked (GlcNAc...) asparagine glycosylation is found at asparagine 45, asparagine 72, and asparagine 103.

The protein localises to the secreted. Functionally, salivary chemokine-binding protein which binds to host chemokines CCL3 and CCL4. This Amblyomma maculatum (Gulf Coast tick) protein is Evasin P1181.